Consider the following 370-residue polypeptide: Pyruvate dehydrogenase E1 component subunit alpha (370 aa).

In terms of assembly, heterodimer of an alpha and a beta chain. The cofactor is thiamine diphosphate.

The enzyme catalyses N(6)-[(R)-lipoyl]-L-lysyl-[protein] + pyruvate + H(+) = N(6)-[(R)-S(8)-acetyldihydrolipoyl]-L-lysyl-[protein] + CO2. In terms of biological role, the pyruvate dehydrogenase complex catalyzes the overall conversion of pyruvate to acetyl-CoA and CO(2). It contains multiple copies of three enzymatic components: pyruvate dehydrogenase (E1), dihydrolipoamide acetyltransferase (E2) and lipoamide dehydrogenase (E3). In Staphylococcus aureus (strain COL), this protein is Pyruvate dehydrogenase E1 component subunit alpha (pdhA).